The sequence spans 175 residues: Sec-independent protein translocase protein TatB (175 aa).

A helical transmembrane segment spans residues 1 to 21 (MLDLGLTKMALIGVVALVVLG). Disordered stretches follow at residues 104-132 (GGAL…RKNW) and 155-175 (SGAA…TRFF).

The protein belongs to the TatB family. In terms of assembly, the Tat system comprises two distinct complexes: a TatABC complex, containing multiple copies of TatA, TatB and TatC subunits, and a separate TatA complex, containing only TatA subunits. Substrates initially bind to the TatABC complex, which probably triggers association of the separate TatA complex to form the active translocon.

Its subcellular location is the cell inner membrane. In terms of biological role, part of the twin-arginine translocation (Tat) system that transports large folded proteins containing a characteristic twin-arginine motif in their signal peptide across membranes. Together with TatC, TatB is part of a receptor directly interacting with Tat signal peptides. TatB may form an oligomeric binding site that transiently accommodates folded Tat precursor proteins before their translocation. This is Sec-independent protein translocase protein TatB from Paraburkholderia xenovorans (strain LB400).